The following is a 1284-amino-acid chain: ABC multidrug transporter atrC (1284 aa).

A compositionally biased stretch (basic and acidic residues) spans Met1–Pro11. Positions Met1–Glu24 are disordered. 6 consecutive transmembrane segments (helical) span residues Ala55–Phe75, Ala99–Thr119, Ile178–Val198, Thr203–Val223, Leu282–Phe302, and Ile320–Tyr340. In terms of domain architecture, ABC transmembrane type-1 1 spans Ala55–Arg346. The ABC transporter 1 domain maps to Val381–Ile626. Residues Asn385 and Asn401 are each glycosylated (N-linked (GlcNAc...) asparagine). Gly416–Ser423 serves as a coordination point for ATP. N-linked (GlcNAc...) asparagine glycosylation is found at Asn488 and Asn632. A run of 2 helical transmembrane segments spans residues Leu705–Met725 and Phe745–Gly765. An ABC transmembrane type-1 2 domain is found at Leu705–Lys992. The N-linked (GlcNAc...) asparagine glycan is linked to Asn800. The next 4 membrane-spanning stretches (helical) occupy residues Ile824–Phe844, Trp846–Val866, Met931–Tyr951, and Leu955–Phe975. An N-linked (GlcNAc...) asparagine glycan is attached at Asn995. Residues Ile1027 to Ala1280 enclose the ABC transporter 2 domain. Gly1062–Ser1069 lines the ATP pocket. Asn1122 is a glycosylation site (N-linked (GlcNAc...) asparagine).

It belongs to the ABC transporter superfamily. ABCB family. Multidrug resistance exporter (TC 3.A.1.201) subfamily.

It localises to the cell membrane. In terms of biological role, pleiotropic ABC efflux transporter involved in the protection of the cells against a wide range of toxic compounds. The chain is ABC multidrug transporter atrC from Emericella nidulans (strain FGSC A4 / ATCC 38163 / CBS 112.46 / NRRL 194 / M139) (Aspergillus nidulans).